The sequence spans 394 residues: Elongation factor Tu 1 (394 aa).

The tr-type G domain occupies 10–204 (KPHVNVGTIG…ALDSYIPEPQ (195 aa)). A G1 region spans residues 19–26 (GHVDHGKT). 19-26 (GHVDHGKT) lines the GTP pocket. Mg(2+) is bound at residue T26. Residues 60–64 (GITIN) are G2. The segment at 81–84 (DCPG) is G3. Residues 81–85 (DCPGH) and 136–139 (NKCD) contribute to the GTP site. Positions 136 to 139 (NKCD) are G4. Residues 174–176 (SAL) are G5.

Belongs to the TRAFAC class translation factor GTPase superfamily. Classic translation factor GTPase family. EF-Tu/EF-1A subfamily. In terms of assembly, monomer.

The protein localises to the cytoplasm. The catalysed reaction is GTP + H2O = GDP + phosphate + H(+). Functionally, GTP hydrolase that promotes the GTP-dependent binding of aminoacyl-tRNA to the A-site of ribosomes during protein biosynthesis. The chain is Elongation factor Tu 1 from Shewanella baltica (strain OS195).